We begin with the raw amino-acid sequence, 679 residues long: Acetyl-coenzyme A synthetase 2 (679 aa).

Residues 1–32 (MTSSPTHQVVHEANNIKKQETPKEFFERQPRQ) are disordered. The segment covering 14 to 30 (NNIKKQETPKEFFERQP) has biased composition (basic and acidic residues). CoA is bound by residues 207 to 210 (RGGK) and threonine 326. Residues 402–404 (GEP), 426–431 (DTYWQT), aspartate 517, and arginine 532 contribute to the ATP site. CoA is bound at residue serine 540. ATP is bound at residue arginine 543. Arginine 611 serves as a coordination point for CoA.

It belongs to the ATP-dependent AMP-binding enzyme family.

The catalysed reaction is acetate + ATP + CoA = acetyl-CoA + AMP + diphosphate. The protein is Acetyl-coenzyme A synthetase 2 (ACS2) of Debaryomyces hansenii (strain ATCC 36239 / CBS 767 / BCRC 21394 / JCM 1990 / NBRC 0083 / IGC 2968) (Yeast).